The following is a 478-amino-acid chain: Keratin, type II cytoskeletal 8 (478 aa).

The segment at 1 to 97 (MSIRVTQKSY…DPNIQAVRTQ (97 aa)) is head. The residue at position 9 (Ser-9) is a Phosphoserine; by PKC/PRKCE. Lys-11 participates in a covalent cross-link: Glycyl lysine isopeptide (Lys-Gly) (interchain with G-Cter in SUMO2). Phosphoserine occurs at positions 13, 15, 21, and 22. The disordered stretch occupies residues 16-44 (APRSFSSRSYTSGPGSRISSSAFSRVGSS). Arg-23 bears the Omega-N-methylarginine mark. Residue Ser-24 is modified to Phosphoserine; by PKC/PRKCE. Position 26 is a phosphothreonine (Thr-26). A phosphoserine mark is found at Ser-27 and Ser-31. Arg-32 is subject to Omega-N-methylarginine. Residues Ser-34 and Ser-39 each carry the phosphoserine modification. Position 40 is an omega-N-methylarginine (Arg-40). Residues Ser-43 and Ser-44 each carry the phosphoserine modification. Arg-48 bears the Asymmetric dimethylarginine; alternate mark. Arg-48 is modified (omega-N-methylarginine; alternate). The residue at position 81 (Ser-81) is a Phosphoserine; by MAPK. The tract at residues 98 to 133 (EKEQIKTLNNKFASFIDKVRHLEQQNKVLETKWNLL) is coil 1A. Residues 98–409 (EKEQIKTLNN…KLLEGEESRL (312 aa)) enclose the IF rod domain. Lys-108 bears the N6-malonyllysine mark. Glycyl lysine isopeptide (Lys-Gly) (interchain with G-Cter in SUMO2) cross-links involve residues Lys-129 and Lys-137. Residues 134 to 150 (QQQKTARSNIDNMFESY) are linker 1. The coil 1B stretch occupies residues 151 to 242 (INNLRRQLET…QLYEEEIREM (92 aa)). Residue Lys-204 forms a Glycyl lysine isopeptide (Lys-Gly) (interchain with G-Cter in SUMO1); alternate linkage. Lys-204 participates in a covalent cross-link: Glycyl lysine isopeptide (Lys-Gly) (interchain with G-Cter in SUMO2); alternate. Lys-214 carries the post-translational modification N6-acetyllysine. Tyr-235 is subject to Phosphotyrosine. A linker 12 region spans residues 243–266 (QSQISDTSVVLEMDNNRNLDLDGI). The interval 267 to 405 (IAEVKAQYEE…ATYRKLLEGE (139 aa)) is coil 2. A necessary for interaction with PNN region spans residues 268–389 (AEVKAQYEEI…EYQELMNVKL (122 aa)). Lys-271 is covalently cross-linked (Glycyl lysine isopeptide (Lys-Gly) (interchain with G-Cter in SUMO2)). Ser-281 carries the phosphoserine modification. A Glycyl lysine isopeptide (Lys-Gly) (interchain with G-Cter in SUMO2) cross-link involves residue Lys-292. Lys-302 is covalently cross-linked (Glycyl lysine isopeptide (Lys-Gly) (interchain with G-Cter in SUMO2); alternate). The residue at position 302 (Lys-302) is an N6-acetyllysine; alternate. Lys-311 participates in a covalent cross-link: Glycyl lysine isopeptide (Lys-Gly) (interchain with G-Cter in SUMO2). Residue Lys-332 forms a Glycyl lysine isopeptide (Lys-Gly) (interchain with G-Cter in SUMO2); alternate linkage. N6-acetyllysine; alternate is present on Lys-332. Ser-337 carries the phosphoserine modification. Lys-400 is covalently cross-linked (Glycyl lysine isopeptide (Lys-Gly) (interchain with G-Cter in SUMO2)). Positions 406–478 (ESRLESGMQN…VSESSDVLSK (73 aa)) are tail. Phosphoserine occurs at positions 407, 411, 417, 424, and 433. Lys-467 participates in a covalent cross-link: Glycyl lysine isopeptide (Lys-Gly) (interchain with G-Cter in SUMO1); alternate. A Glycyl lysine isopeptide (Lys-Gly) (interchain with G-Cter in SUMO2); alternate cross-link involves residue Lys-467. 4 positions are modified to phosphoserine: Ser-470, Ser-472, Ser-473, and Ser-477.

This sequence belongs to the intermediate filament family. As to quaternary structure, heterotetramer of two type I and two type II keratins. Forms a heterodimer with KRT18. Associates with KRT20. Interacts with PNN. When associated with KRT19, interacts with DMD. Interacts with TCHP. Interacts with APEX1. Interacts with GPER1. Interacts with EPPK1. Interacts with PKP1 and PKP2. In terms of processing, O-glycosylated. O-GlcNAcylation at multiple sites increases solubility, and decreases stability by inducing proteasomal degradation. Post-translationally, O-glycosylated (O-GlcNAcylated), in a cell cycle-dependent manner. In terms of tissue distribution, expressed in bladder, liver, exocervix and (in very low amounts) esophagus.

It is found in the cytoplasm. The protein resides in the nucleus. It localises to the nucleoplasm. The protein localises to the nucleus matrix. Its function is as follows. Together with KRT19, helps to link the contractile apparatus to dystrophin at the costameres of striated muscle. This Bos taurus (Bovine) protein is Keratin, type II cytoskeletal 8 (KRT8).